The sequence spans 1390 residues: General transcriptional corepressor trfA (1390 aa).

Residues Gln-53 to Gln-143 are disordered. TPR repeat units follow at residues Glu-171–Ser-204, Lys-206–Asn-238, Gly-239–Pro-272, Pro-275–Phe-308, Thr-312–Pro-345, Ser-349–His-382, Lys-384–Asp-419, Ala-420–Asn-453, Pro-454–Leu-487, and Glu-489–Asn-521. Disordered regions lie at residues Pro-539 to Val-596, Glu-632 to Ile-938, and Leu-958 to Arg-1390. Basic and acidic residues predominate over residues Ile-540–Gly-557. Residues Gln-582–Asn-593 are compositionally biased toward low complexity. Residues Glu-632–Asn-641 show a composition bias toward basic and acidic residues. Low complexity predominate over residues His-644–Asn-744. Over residues Asp-745–Arg-803 the composition is skewed to basic and acidic residues. The segment covering Tyr-805–Asn-846 has biased composition (low complexity). Positions His-857–Ile-871 are enriched in basic and acidic residues. Composition is skewed to low complexity over residues Asn-872–Asn-898 and Asn-917–Asn-937. Basic and acidic residues-rich tracts occupy residues Lys-977 to Ser-993, Glu-1000 to Ser-1029, Lys-1037 to Ser-1099, and Thr-1120 to Leu-1135. The segment covering Ser-1136–Glu-1146 has biased composition (polar residues). Basic and acidic residues predominate over residues Gln-1147–Ser-1169. Composition is skewed to low complexity over residues Ser-1170 to Ser-1180 and Thr-1192 to Thr-1203. The segment covering Pro-1206–Asp-1218 has biased composition (basic and acidic residues). Residues Thr-1219–Thr-1228 are compositionally biased toward low complexity. Polar residues predominate over residues Lys-1229 to Thr-1239. Residues Arg-1240–Asp-1263 are compositionally biased toward basic and acidic residues. Composition is skewed to low complexity over residues Ser-1277–Ser-1289 and Ser-1315–Ser-1337. A compositionally biased stretch (basic and acidic residues) spans Lys-1339 to Lys-1374.

The protein belongs to the CYC8/SSN6 family. Associates with tupA to form the trfA-tupA corepressor complex.

Its subcellular location is the nucleus. Acts as a component of the trfA-tupA corepressor complex which is involved in the repression of many genes in a wide variety of physiological processes. May also be involved in the derepression of at least some target genes. The complex is recruited to target genes by interaction with DNA-bound transcriptional repressors. The complex recruits histone deacetylases to produce a repressive chromatin structure, interacts with hypoacetylated N-terminal tails of histones H3 and H4 that have been programmed for repression by the action of histone deacetylases and interferes directly with the transcriptional machinery by associating with the RNA polymerase II mediator complex. Required for normal growth and for aggregation in early development. Required for a proper chemotactic response to cAMP. This chain is General transcriptional corepressor trfA (trfA), found in Dictyostelium discoideum (Social amoeba).